We begin with the raw amino-acid sequence, 430 residues long: Lipoyl synthase, mitochondrial (430 aa).

The N-terminal 37 residues, 1 to 37, are a transit peptide targeting the mitochondrion; the sequence is MATSAGKLRTLYSAHSSLSSLPPSARPTLQLATLRSY. Polar residues predominate over residues 39–55; the sequence is TTTPHDSPIGNTSNTPP. The interval 39-59 is disordered; sequence TTTPHDSPIGNTSNTPPTVKR. Cys141, Cys146, Cys152, Cys172, Cys176, Cys179, and Ser387 together coordinate [4Fe-4S] cluster. Residues 155–376 enclose the Radical SAM core domain; it reads GSSKSAATAT…KERALEMGFL (222 aa).

Belongs to the radical SAM superfamily. Lipoyl synthase family. [4Fe-4S] cluster is required as a cofactor.

Its subcellular location is the mitochondrion. It carries out the reaction [[Fe-S] cluster scaffold protein carrying a second [4Fe-4S](2+) cluster] + N(6)-octanoyl-L-lysyl-[protein] + 2 oxidized [2Fe-2S]-[ferredoxin] + 2 S-adenosyl-L-methionine + 4 H(+) = [[Fe-S] cluster scaffold protein] + N(6)-[(R)-dihydrolipoyl]-L-lysyl-[protein] + 4 Fe(3+) + 2 hydrogen sulfide + 2 5'-deoxyadenosine + 2 L-methionine + 2 reduced [2Fe-2S]-[ferredoxin]. It participates in protein modification; protein lipoylation via endogenous pathway; protein N(6)-(lipoyl)lysine from octanoyl-[acyl-carrier-protein]: step 2/2. Catalyzes the radical-mediated insertion of two sulfur atoms into the C-6 and C-8 positions of the octanoyl moiety bound to the lipoyl domains of lipoate-dependent enzymes, thereby converting the octanoylated domains into lipoylated derivatives. The sequence is that of Lipoyl synthase, mitochondrial from Ajellomyces capsulatus (strain H143) (Darling's disease fungus).